The sequence spans 137 residues: Small ribosomal subunit protein uS12 (137 aa).

The segment at Met-1–Lys-57 is disordered. A compositionally biased stretch (polar residues) spans Lys-32–Pro-41. Asp-102 bears the 3-methylthioaspartic acid mark.

It belongs to the universal ribosomal protein uS12 family. As to quaternary structure, part of the 30S ribosomal subunit. Contacts proteins S8 and S17. May interact with IF1 in the 30S initiation complex.

In terms of biological role, with S4 and S5 plays an important role in translational accuracy. Functionally, interacts with and stabilizes bases of the 16S rRNA that are involved in tRNA selection in the A site and with the mRNA backbone. Located at the interface of the 30S and 50S subunits, it traverses the body of the 30S subunit contacting proteins on the other side and probably holding the rRNA structure together. The combined cluster of proteins S8, S12 and S17 appears to hold together the shoulder and platform of the 30S subunit. The chain is Small ribosomal subunit protein uS12 from Ligilactobacillus salivarius (strain UCC118) (Lactobacillus salivarius).